Reading from the N-terminus, the 616-residue chain is Chaperone protein HscA (616 aa).

Belongs to the heat shock protein 70 family.

Chaperone involved in the maturation of iron-sulfur cluster-containing proteins. Has a low intrinsic ATPase activity which is markedly stimulated by HscB. Involved in the maturation of IscU. The sequence is that of Chaperone protein HscA from Salmonella paratyphi B (strain ATCC BAA-1250 / SPB7).